The following is a 44-amino-acid chain: Tachystatin-A1 (44 aa).

Intrachain disulfides connect cysteine 4–cysteine 24, cysteine 11–cysteine 29, and cysteine 23–cysteine 41.

Granular hemocytes, small secretory granules.

It is found in the secreted. Exhibits stronger antimicrobial activity against the Gram-positive bacteria (S.aureus (IC(50) is 4.2 ug/ml)) and fungi (C.albicans (IC(50) is 3.0 ug/ml) and P.pastoris (IC(50) is 0.5 ug/ml)) than Gram-negative bacteria (E.coli (IC(50) is 25 ug/ml)). Binds to chitin (8.4 uM are required to obtain 50% of binding). Does not cause hemolysis on sheep erythrocytes. Has no blocking activity on the P-type calcium channel. The protein is Tachystatin-A1 of Tachypleus tridentatus (Japanese horseshoe crab).